The sequence spans 314 residues: Acetaldehyde dehydrogenase 2 (314 aa).

NAD(+) is bound at residue 15–18 (SGNI). Cysteine 133 acts as the Acyl-thioester intermediate in catalysis. NAD(+)-binding positions include 164–172 (SAGPGTRAN) and asparagine 291.

This sequence belongs to the acetaldehyde dehydrogenase family.

The enzyme catalyses acetaldehyde + NAD(+) + CoA = acetyl-CoA + NADH + H(+). The protein is Acetaldehyde dehydrogenase 2 of Pseudomonas putida (strain ATCC 700007 / DSM 6899 / JCM 31910 / BCRC 17059 / LMG 24140 / F1).